A 394-amino-acid polypeptide reads, in one-letter code: Elongation factor Tu (394 aa).

A tr-type G domain is found at 10 to 204; sequence KPHVNVGTIG…ALDTYIPEPE (195 aa). The tract at residues 19-26 is G1; sequence GHVDHGKT. GTP is bound at residue 19 to 26; sequence GHVDHGKT. Threonine 26 serves as a coordination point for Mg(2+). Residues 60 to 64 form a G2 region; the sequence is GITIN. Residues 81–84 form a G3 region; it reads DCPG. GTP-binding positions include 81–85 and 136–139; these read DCPGH and NKCD. The interval 136 to 139 is G4; that stretch reads NKCD. The interval 174–176 is G5; it reads SAL.

Belongs to the TRAFAC class translation factor GTPase superfamily. Classic translation factor GTPase family. EF-Tu/EF-1A subfamily. In terms of assembly, monomer.

It is found in the cytoplasm. The enzyme catalyses GTP + H2O = GDP + phosphate + H(+). Functionally, GTP hydrolase that promotes the GTP-dependent binding of aminoacyl-tRNA to the A-site of ribosomes during protein biosynthesis. This is Elongation factor Tu from Shewanella halifaxensis (strain HAW-EB4).